The primary structure comprises 401 residues: Multidrug resistance protein MdtA (401 aa).

A signal peptide spans 1–20 (MNQNNKHRTLLFRAALAAIA).

It belongs to the membrane fusion protein (MFP) (TC 8.A.1) family. As to quaternary structure, part of a tripartite efflux system composed of MdtA, MdtB and MdtC.

It is found in the cell inner membrane. The polypeptide is Multidrug resistance protein MdtA (Photorhabdus laumondii subsp. laumondii (strain DSM 15139 / CIP 105565 / TT01) (Photorhabdus luminescens subsp. laumondii)).